Consider the following 316-residue polypeptide: Transcription factor MafB (316 aa).

Disordered regions lie at residues 40–78 and 116–204; these read PDRA…SPTE and HQMP…EDRF. The segment covering 55–77 has biased composition (low complexity); sequence SVSSTPISTPCSSVPSSPSFSPT. Composition is skewed to basic residues over residues 130-144 and 160-172; these read GHHH…HQNH and QHPH…HHHQ. The span at 177 to 198 shows a compositional bias: low complexity; that stretch reads PSGSSSSSQQLQNSHQQHQNSS. The tract at residues 231–256 is basic motif; that stretch reads RLKQKRRTLKNRGYAQSCRFKRVQQK. In terms of domain architecture, bZIP spans 231–294; that stretch reads RLKQKRRTLK…DAYKIKCEKL (64 aa). Residues 259–280 form a leucine-zipper region; that stretch reads LENEKTQLIQQVEQLKLEVSRL.

The protein belongs to the bZIP family. Maf subfamily. Homodimer or heterodimer with other bHLH-Zip transcription factors. Binds DNA as a homodimer or a heterodimer.

Its subcellular location is the nucleus. Acts as a transcriptional activator or repressor. Implicated in the regulation of cell-type specific gene expression and play a role in inductive events during lens development. The chain is Transcription factor MafB (mafb) from Xenopus tropicalis (Western clawed frog).